The sequence spans 608 residues: Actin-related protein 8 (608 aa).

Residues 1–20 (MQRSRASSTSSGRLQASQQV) are disordered. 272–275 (DIGA) provides a ligand contact to ATP.

This sequence belongs to the actin family. ARP8 subfamily. As to quaternary structure, component of the chromatin remodeling Ino80 complex. Exists as monomers and dimers, but the dimer is most probably the biologically relevant form required for stable interactions with histones that exploits the twofold symmetry of the nucleosome core.

Its subcellular location is the nucleus. Functionally, plays an important role in the functional organization of mitotic chromosomes. Exhibits low basal ATPase activity, and unable to polymerize. In terms of biological role, proposed core component of the chromatin remodeling INO80 complex which is involved in transcriptional regulation, DNA replication and probably DNA repair. Strongly prefer nucleosomes and H3-H4 tetramers over H2A-H2B dimers, suggesting it may act as a nucleosome recognition module within the complex. The sequence is that of Actin-related protein 8 from Drosophila pseudoobscura pseudoobscura (Fruit fly).